Consider the following 133-residue polypeptide: Interleukin-4 (133 aa).

An N-terminal signal peptide occupies residues 1–24; sequence MGLTYQLIPALVCLLAFTSTFVHG. Residues asparagine 28, asparagine 45, asparagine 62, asparagine 84, asparagine 96, and asparagine 102 are each glycosylated (N-linked (GlcNAc...) asparagine). 2 disulfides stabilise this stretch: cysteine 48-cysteine 85 and cysteine 70-cysteine 113.

Belongs to the IL-4/IL-13 family.

Its subcellular location is the secreted. Participates in at least several B-cell activation processes as well as of other cell types. It is a costimulator of DNA-synthesis. It induces the expression of class II MHC molecules on resting B-cells. It enhances both secretion and cell surface expression of IgE and IgG1. It also regulates the expression of the low affinity Fc receptor for IgE (CD23) on both lymphocytes and monocytes. Positively regulates IL31RA expression in macrophages. Stimulates autophagy in dendritic cells by interfering with mTORC1 signaling and through the induction of RUFY4. The protein is Interleukin-4 (IL4) of Felis catus (Cat).